Reading from the N-terminus, the 283-residue chain is uncharacterized protein (283 aa).

Residues 1-21 (MKLKLKFLLISLLGSSLLLSA) form the signal peptide. Cys-22 is lipidated: N-palmitoyl cysteine. The S-diacylglycerol cysteine moiety is linked to residue Cys-22.

This sequence belongs to the MG439/MG440 family.

The protein localises to the cell membrane. This is an uncharacterized protein from Mycoplasma pneumoniae (strain ATCC 29342 / M129 / Subtype 1) (Mycoplasmoides pneumoniae).